A 286-amino-acid chain; its full sequence is Protein N-terminal amidase (286 aa).

The 286-residue stretch at 1-286 (MKFGCVQFFP…NGIVVGELEK (286 aa)) folds into the CN hydrolase domain. The Proton acceptor role is filled by Glu43. The active-site Proton donor is Lys121. Cys155 (nucleophile) is an active-site residue.

This sequence belongs to the carbon-nitrogen hydrolase superfamily.

It is found in the cytoplasm. The protein resides in the nucleus. Deamidates N-terminal Asn and Gln. Component of a targeting complex in the N-end rule pathway. This is Protein N-terminal amidase (nta1) from Schizosaccharomyces pombe (strain 972 / ATCC 24843) (Fission yeast).